A 67-amino-acid chain; its full sequence is Beta-defensin 123 (67 aa).

The first 20 residues, 1–20 (MKLLLLTLTVLLLLSQLTPG), serve as a signal peptide directing secretion. Cystine bridges form between Cys-25/Cys-52, Cys-32/Cys-46, and Cys-36/Cys-53.

Belongs to the beta-defensin family.

The protein resides in the secreted. In terms of biological role, has antibacterial activity. The chain is Beta-defensin 123 (DEFB123) from Gorilla gorilla gorilla (Western lowland gorilla).